Consider the following 185-residue polypeptide: Dihydrofolate reductase (185 aa).

The region spanning 5–184 (KLNLIAAACD…ISYYFRVYKK (180 aa)) is the DHFR domain. Residues alanine 11 and 17–23 (GIGVNGA) contribute to the NADP(+) site. 31–36 (EMAYFT) is a binding site for substrate. Residue 55 to 57 (RRT) participates in NADP(+) binding. Arginine 71 is a binding site for substrate. NADP(+) contacts are provided by residues 77-79 (THN) and 117-124 (GGSSIYRA).

This sequence belongs to the dihydrofolate reductase family.

It carries out the reaction (6S)-5,6,7,8-tetrahydrofolate + NADP(+) = 7,8-dihydrofolate + NADPH + H(+). The protein operates within cofactor biosynthesis; tetrahydrofolate biosynthesis; 5,6,7,8-tetrahydrofolate from 7,8-dihydrofolate: step 1/1. Its activity is regulated as follows. Activated by dithiothreitol and p-chloromercuribenzoate. Inhibited by trimethoprim, methotrexate, sodium tetrathionate and hydroxymercuribenzoate. Functionally, key enzyme in folate metabolism. Catalyzes an essential reaction for de novo glycine and purine synthesis, and for DNA precursor synthesis. In Heliothis virescens (Tobacco budworm moth), this protein is Dihydrofolate reductase (DHFR).